The chain runs to 293 residues: Acetylglutamate kinase (293 aa).

Residues 65 to 66, Arg87, and Asn188 contribute to the substrate site; that span reads GG.

This sequence belongs to the acetylglutamate kinase family. ArgB subfamily.

The protein localises to the cytoplasm. It carries out the reaction N-acetyl-L-glutamate + ATP = N-acetyl-L-glutamyl 5-phosphate + ADP. It functions in the pathway amino-acid biosynthesis; L-arginine biosynthesis; N(2)-acetyl-L-ornithine from L-glutamate: step 2/4. Functionally, catalyzes the ATP-dependent phosphorylation of N-acetyl-L-glutamate. This chain is Acetylglutamate kinase, found in Symbiobacterium thermophilum (strain DSM 24528 / JCM 14929 / IAM 14863 / T).